Here is a 177-residue protein sequence, read N- to C-terminus: Large ribosomal subunit protein uL6 (177 aa).

This sequence belongs to the universal ribosomal protein uL6 family. Part of the 50S ribosomal subunit.

In terms of biological role, this protein binds to the 23S rRNA, and is important in its secondary structure. It is located near the subunit interface in the base of the L7/L12 stalk, and near the tRNA binding site of the peptidyltransferase center. The chain is Large ribosomal subunit protein uL6 from Proteus mirabilis (strain HI4320).